Here is a 431-residue protein sequence, read N- to C-terminus: Serine--tRNA ligase (431 aa).

Residue 238–240 coordinates L-serine; sequence TAE. 269–271 contacts ATP; the sequence is RSE. An L-serine-binding site is contributed by Glu-292. Position 356–359 (356–359) interacts with ATP; the sequence is EISS. Ser-391 is an L-serine binding site.

Belongs to the class-II aminoacyl-tRNA synthetase family. Type-1 seryl-tRNA synthetase subfamily. As to quaternary structure, homodimer. The tRNA molecule binds across the dimer.

The protein localises to the cytoplasm. It carries out the reaction tRNA(Ser) + L-serine + ATP = L-seryl-tRNA(Ser) + AMP + diphosphate + H(+). The catalysed reaction is tRNA(Sec) + L-serine + ATP = L-seryl-tRNA(Sec) + AMP + diphosphate + H(+). It functions in the pathway aminoacyl-tRNA biosynthesis; selenocysteinyl-tRNA(Sec) biosynthesis; L-seryl-tRNA(Sec) from L-serine and tRNA(Sec): step 1/1. Catalyzes the attachment of serine to tRNA(Ser). Is also able to aminoacylate tRNA(Sec) with serine, to form the misacylated tRNA L-seryl-tRNA(Sec), which will be further converted into selenocysteinyl-tRNA(Sec). The protein is Serine--tRNA ligase of Bdellovibrio bacteriovorus (strain ATCC 15356 / DSM 50701 / NCIMB 9529 / HD100).